Here is a 151-residue protein sequence, read N- to C-terminus: Large ribosomal subunit protein uL22 (151 aa).

It belongs to the universal ribosomal protein uL22 family. Part of the 50S ribosomal subunit.

This protein binds specifically to 23S rRNA. It makes multiple contacts with different domains of the 23S rRNA in the assembled 50S subunit and ribosome. Its function is as follows. The globular domain of the protein is located near the polypeptide exit tunnel on the outside of the subunit, while an extended beta-hairpin is found that lines the wall of the exit tunnel in the center of the 70S ribosome. This is Large ribosomal subunit protein uL22 from Thermofilum pendens (strain DSM 2475 / Hrk 5).